Reading from the N-terminus, the 516-residue chain is MATSRDRLGTLEAEGSSGRQGYSGVEVVLSSDPATPAPLCPHELGPTLLFVKVNQGKEETRRFYACSACRDRKDCNFFQWEDEKLSGARLAAREAHNRSCQPPLSRSQCVERYLKFIELPLSQRKFCQSCQQLLLPDDEEKHHEHQVVGDVSITQLKRPSKLLYPLENKKTNAQYLFADRSCLFLVDLLSNLGFRRVLCVGTPRLHELIRLKESGGTKSNIRSLLLDIDFRYSQFYMEDSFCHYNMFNHHFFDGKAALEVCKTFLQEDKGEGVIMVTDPPFGGLVEPLAVTFKKLIAMWKEGHSQDNSQKELPIFWIFPYFFESRICQFFPSFCMLDYQVVDYDNHALYKHGKTGRKQSPVRIFTNIPPNKIILPIEEGYRFCPLCQRYVSLENQHCEHCNSCTSKDGRKWNHCFLCKKCVKPSWIHCSICNHCALPDHSCKGPKDGCFICGELDHKRSACPNISTSKKVNKAVRKQKQRKSNKMKMETTKGQSMNHTSATRKKKRRERTHQYLCS.

Residues Cys-40, His-42, Cys-66, Cys-75, Cys-127, Cys-130, His-142, and His-145 each coordinate Zn(2+). A GRF-type zinc finger spans residues 40–84 (CPHELGPTLLFVKVNQGKEETRRFYACSACRDRKDCNFFQWEDEK). S-adenosyl-L-methionine contacts are provided by residues 174–177 (QYLF), Arg-204, Asp-227, 245–246 (NM), and Asp-278. The regulatory loop stretch occupies residues 339–360 (QVVDYDNHALYKHGKTGRKQSP). Residues Cys-383, Cys-386, His-396, Cys-397, Cys-400, Cys-403, His-413, Cys-414, Cys-417, Cys-420, His-427, Cys-428, Cys-431, Cys-434, His-439, and Cys-441 each coordinate Zn(2+). In terms of domain architecture, DHHC spans 398-448 (EHCNSCTSKDGRKWNHCFLCKKCVKPSWIHCSICNHCALPDHSCKGPKDGC). A CCHC-type zinc finger spans residues 446-463 (DGCFICGELDHKRSACPN). Residues 472-484 (KAVRKQKQRKSNK) show a composition bias toward basic residues. Residues 472–516 (KAVRKQKQRKSNKMKMETTKGQSMNHTSATRKKKRRERTHQYLCS) are disordered. A compositionally biased stretch (polar residues) spans 490–499 (TKGQSMNHTS). The segment covering 500-509 (ATRKKKRRER) has biased composition (basic residues).

Belongs to the ZCCHC4 family. As to quaternary structure, interacts with components of the ASC-1 complex TRIP4, ASCC1, ASCC2 and ASCC3. Interact with AHCYL1 and AHCYL2. Interact with YTHDC2.

The protein resides in the cytoplasm. It is found in the nucleus. Its subcellular location is the nucleolus. The enzyme catalyses adenosine(4220) in 28S rRNA + S-adenosyl-L-methionine = N(6)-methyladenosine(4220) in 28S rRNA + S-adenosyl-L-homocysteine + H(+). In terms of biological role, rRNA N6-methyltransferase that specifically methylates the adenine in position 4220 of 28S rRNA. N6-methylation of adenine(4220) in 28S rRNA is required for translation. This is rRNA N(6)-adenosine-methyltransferase ZCCHC4 from Bos taurus (Bovine).